A 260-amino-acid polypeptide reads, in one-letter code: (+)-borneol dehydrogenase 1 (260 aa).

NAD(+)-binding positions include 20–26, Asp-44, 67–68, and 94–96; these read GGASGIG, DV, and NAG. The Proton donor role is filled by Ser-148. Positions 161, 165, and 196 each coordinate NAD(+). Tyr-161 acts as the Proton acceptor in catalysis. The active-site Proton donor/acceptor is the Lys-165.

Belongs to the short-chain dehydrogenases/reductases (SDR) family.

It catalyses the reaction (1R,2S,4R)-borneol + NAD(+) = (1R,4R)-camphor + NADH + H(+). Involved in the biosynthesis of monoterpene natural products related to camphor. Catalayzes the oxidation of (+)-borneol to (+)-camphor. Shows absolute selectivity towards (+)-borneol. Catalyzes the oxidation of (+)-isoborneol to (-)-camphor. Shows absolute selectivity towards (+)-isoborneol. The sequence is that of (+)-borneol dehydrogenase 1 from Salvia officinalis (Sage).